Reading from the N-terminus, the 150-residue chain is Large ribosomal subunit protein bL9 (150 aa).

Belongs to the bacterial ribosomal protein bL9 family.

Functionally, binds to the 23S rRNA. This is Large ribosomal subunit protein bL9 from Pseudoalteromonas atlantica (strain T6c / ATCC BAA-1087).